The following is a 120-amino-acid chain: Large ribosomal subunit protein bL20c (120 aa).

This sequence belongs to the bacterial ribosomal protein bL20 family.

It is found in the plastid. Functionally, binds directly to 23S ribosomal RNA and is necessary for the in vitro assembly process of the 50S ribosomal subunit. It is not involved in the protein synthesizing functions of that subunit. The protein is Large ribosomal subunit protein bL20c of Cuscuta obtusiflora (Peruvian dodder).